The chain runs to 307 residues: Ornithine carbamoyltransferase (307 aa).

Residues Ser54–Thr57, Gln81, Arg105, and His132–Gln135 contribute to the carbamoyl phosphate site. L-ornithine is bound by residues Asn163, Asp221, and Ser225 to Met226. Carbamoyl phosphate-binding positions include Cys261–Leu262 and Arg289.

It belongs to the aspartate/ornithine carbamoyltransferase superfamily. OTCase family.

It localises to the cytoplasm. The enzyme catalyses carbamoyl phosphate + L-ornithine = L-citrulline + phosphate + H(+). It participates in amino-acid biosynthesis; L-arginine biosynthesis; L-arginine from L-ornithine and carbamoyl phosphate: step 1/3. Its function is as follows. Reversibly catalyzes the transfer of the carbamoyl group from carbamoyl phosphate (CP) to the N(epsilon) atom of ornithine (ORN) to produce L-citrulline. The chain is Ornithine carbamoyltransferase from Aromatoleum aromaticum (strain DSM 19018 / LMG 30748 / EbN1) (Azoarcus sp. (strain EbN1)).